The chain runs to 227 residues: Cytochrome c oxidase subunit 2 (227 aa).

Topologically, residues 1-14 (MAYPLQMGLQDATS) are mitochondrial intermembrane. The helical transmembrane segment at 15-45 (PIMEELLHFHDHTLMIVFLISSLVLYIISLM) threads the bilayer. At 46 to 59 (LTTKLTHTSTMDAQ) the chain is on the mitochondrial matrix side. The helical transmembrane segment at 60-87 (EVETVWTILPAIILILIALPSLRILYMM) threads the bilayer. Residues 88–227 (DEINNPSLTV…HFEKWSTSML (140 aa)) are Mitochondrial intermembrane-facing. Positions 161, 196, 198, 200, 204, and 207 each coordinate Cu cation. Glu-198 provides a ligand contact to Mg(2+).

The protein belongs to the cytochrome c oxidase subunit 2 family. As to quaternary structure, component of the cytochrome c oxidase (complex IV, CIV), a multisubunit enzyme composed of 14 subunits. The complex is composed of a catalytic core of 3 subunits MT-CO1, MT-CO2 and MT-CO3, encoded in the mitochondrial DNA, and 11 supernumerary subunits COX4I, COX5A, COX5B, COX6A, COX6B, COX6C, COX7A, COX7B, COX7C, COX8 and NDUFA4, which are encoded in the nuclear genome. The complex exists as a monomer or a dimer and forms supercomplexes (SCs) in the inner mitochondrial membrane with NADH-ubiquinone oxidoreductase (complex I, CI) and ubiquinol-cytochrome c oxidoreductase (cytochrome b-c1 complex, complex III, CIII), resulting in different assemblies (supercomplex SCI(1)III(2)IV(1) and megacomplex MCI(2)III(2)IV(2)). Found in a complex with TMEM177, COA6, COX18, COX20, SCO1 and SCO2. Interacts with TMEM177 in a COX20-dependent manner. Interacts with COX20. Interacts with COX16. Cu cation serves as cofactor.

The protein localises to the mitochondrion inner membrane. The enzyme catalyses 4 Fe(II)-[cytochrome c] + O2 + 8 H(+)(in) = 4 Fe(III)-[cytochrome c] + 2 H2O + 4 H(+)(out). Component of the cytochrome c oxidase, the last enzyme in the mitochondrial electron transport chain which drives oxidative phosphorylation. The respiratory chain contains 3 multisubunit complexes succinate dehydrogenase (complex II, CII), ubiquinol-cytochrome c oxidoreductase (cytochrome b-c1 complex, complex III, CIII) and cytochrome c oxidase (complex IV, CIV), that cooperate to transfer electrons derived from NADH and succinate to molecular oxygen, creating an electrochemical gradient over the inner membrane that drives transmembrane transport and the ATP synthase. Cytochrome c oxidase is the component of the respiratory chain that catalyzes the reduction of oxygen to water. Electrons originating from reduced cytochrome c in the intermembrane space (IMS) are transferred via the dinuclear copper A center (CU(A)) of subunit 2 and heme A of subunit 1 to the active site in subunit 1, a binuclear center (BNC) formed by heme A3 and copper B (CU(B)). The BNC reduces molecular oxygen to 2 water molecules using 4 electrons from cytochrome c in the IMS and 4 protons from the mitochondrial matrix. The polypeptide is Cytochrome c oxidase subunit 2 (MT-CO2) (Phoca vitulina (Harbor seal)).